The sequence spans 530 residues: NADH-quinone oxidoreductase subunit C/D (530 aa).

An NADH dehydrogenase I subunit C region spans residues 1–144; the sequence is MQEIQFIVPA…NPLCMANEET (144 aa). Positions 171-530 are NADH dehydrogenase I subunit D; the sequence is EYVVNIGPQH…LDYVVPDIDR (360 aa).

In the N-terminal section; belongs to the complex I 30 kDa subunit family. It in the C-terminal section; belongs to the complex I 49 kDa subunit family. NDH-1 is composed of 13 different subunits. Subunits NuoB, CD, E, F, and G constitute the peripheral sector of the complex.

Its subcellular location is the cell inner membrane. The catalysed reaction is a quinone + NADH + 5 H(+)(in) = a quinol + NAD(+) + 4 H(+)(out). Functionally, NDH-1 shuttles electrons from NADH, via FMN and iron-sulfur (Fe-S) centers, to quinones in the respiratory chain. The immediate electron acceptor for the enzyme in this species is believed to be a menaquinone. Couples the redox reaction to proton translocation (for every two electrons transferred, four hydrogen ions are translocated across the cytoplasmic membrane), and thus conserves the redox energy in a proton gradient. This chain is NADH-quinone oxidoreductase subunit C/D, found in Bacteroides thetaiotaomicron (strain ATCC 29148 / DSM 2079 / JCM 5827 / CCUG 10774 / NCTC 10582 / VPI-5482 / E50).